The following is an 86-amino-acid chain: MLGIDVKKTKEELIISWQLAEITIPLRDVIEVTEDATYAGVEETSAIRIGTAYGTTDRILIKTVKQNYVLFTTNKVSILNAINAKN.

This sequence belongs to the UPF0457 family.

In Bacillus cereus (strain ZK / E33L), this protein is UPF0457 protein BCE33L2265.